Reading from the N-terminus, the 385-residue chain is 3,5,7-trioxododecanoyl-CoA synthase (385 aa).

Residue C157 is part of the active site.

The protein belongs to the thiolase-like superfamily. Chalcone/stilbene synthases family. In terms of tissue distribution, expressed in bracts, flowers and young leaves. Not detected in mature leaves, roots and stems. Expressed in glandular trichomes.

The enzyme catalyses hexanoyl-CoA + 3 malonyl-CoA + 3 H(+) = 3,5,7-trioxododecanoyl-CoA + 3 CO2 + 3 CoA. The catalysed reaction is 3,5,7-trioxododecanoyl-CoA = olivetol + CO2 + CoA. Its pathway is secondary metabolite biosynthesis; terpenoid biosynthesis. Involved in the biosynthesis of cannabinoids-related terpenophenolic natural products, which have pharmacological activity. Polyketide synthase responsible for olivetol biosynthesis, from a C(12)-polyketide, probably 3,5,7-trioxododecanoyl-CoA. Catalyzes the first step in the cannabinoids biosynthetic pathway. The preferred substrate is hexanoyl-CoA, but also accepts CoA esters with C4 to C8 aliphatic side chains. When using malonyl-CoA and hexanoyl-CoA as substrates, produces undetermined compounds distinct form olivetol or olivetolic acid that could be hexanoyl triacetic acid lactone (HTAL) and pentyl diacetic acid lactone (PDAL). Produces olivetolic acid when acting in concert with olivetolic acid cyclase (OAC). This Cannabis sativa (Hemp) protein is 3,5,7-trioxododecanoyl-CoA synthase.